The primary structure comprises 111 residues: Protein GLUTAMINE DUMPER 6 (111 aa).

Over 1–16 (MRPTPKVEIWKSPVPY) the chain is Extracellular. The helical transmembrane segment at 17–37 (LFGGLFLLVLLIALALLSLVC) threads the bilayer. Residues 38–111 (THQKPSSSSN…NCDNVTVIST (74 aa)) are Cytoplasmic-facing. Positions 40–49 (QKPSSSSNNN) are enriched in polar residues. The interval 40 to 63 (QKPSSSSNNNHMDEEDDVGDKDAK) is disordered. The VIMAG; degenerate motif lies at 75 to 79 (VILAG).

This sequence belongs to the GLUTAMINE DUMPER 1 (TC 9.B.60) family. In terms of tissue distribution, expressed in the vascular tissues.

It is found in the membrane. In terms of biological role, probable subunit of an amino acid transporter involved in the regulation of the amino acid metabolism. Stimulates amino acid export by activating nonselective amino acid facilitators. This Arabidopsis thaliana (Mouse-ear cress) protein is Protein GLUTAMINE DUMPER 6 (GDU6).